The following is a 470-amino-acid chain: MIPVTTLKDRKVALFGLGGSGFATARALIAGGAEVTAWDDNPDSVAKASAEGIRTEDLHGIDWSQQALFVLSPGVPLTHPKPHWTVDLARAAGVDIVGDVELFVRERRAHAPDCPFIAITGTNGKSTTTALIAHILKSAGYDTQLGGNIGTAVLTLDPPKAGRYYVVECSSYQIDLAPTLNPSAGILLNLTPDHLDRHGTMQHYADVKERLVAGSDVAIVGIDDSHSALIADRVERAGVKVVRISRRNAVASGIYAEGIRLVQAVGGAMLPFADLDGIQTLRGSHNAQNAAAAVAACLAVGVSADAIRAGLASFPGLKHRMQPVGKRGRVVFVNDSKATNADAAAPALSSYDRIYWIAGGLPKAGGITTLAPYFPRIAKAYLIGEAAAEFAATLGEAVPYEISGTLERAVAHAAADAERDEAAASAVMLSPACASFDQYRNFEVRGDAFVSHVAALDGMTMLIGPATGEK.

ATP is bound at residue 121-127 (GTNGKST).

Belongs to the MurCDEF family.

The protein resides in the cytoplasm. It carries out the reaction UDP-N-acetyl-alpha-D-muramoyl-L-alanine + D-glutamate + ATP = UDP-N-acetyl-alpha-D-muramoyl-L-alanyl-D-glutamate + ADP + phosphate + H(+). It participates in cell wall biogenesis; peptidoglycan biosynthesis. Functionally, cell wall formation. Catalyzes the addition of glutamate to the nucleotide precursor UDP-N-acetylmuramoyl-L-alanine (UMA). This is UDP-N-acetylmuramoylalanine--D-glutamate ligase from Rhizobium etli (strain ATCC 51251 / DSM 11541 / JCM 21823 / NBRC 15573 / CFN 42).